We begin with the raw amino-acid sequence, 208 residues long: Sodium/potassium-transporting ATPase subunit beta-1-interacting protein 4 (208 aa).

The next 4 membrane-spanning stretches (helical) occupy residues 10 to 30, 35 to 55, 62 to 82, and 151 to 171; these read LILL…FDFL, APIL…FGTL, VIAY…LICF, and ALQI…TSVF.

This sequence belongs to the NKAIN family. In terms of assembly, interacts with atp1b1 C-terminus.

It is found in the cell membrane. The chain is Sodium/potassium-transporting ATPase subunit beta-1-interacting protein 4 (nkain4) from Xenopus tropicalis (Western clawed frog).